We begin with the raw amino-acid sequence, 301 residues long: D-alanine--D-alanine ligase (301 aa).

Positions 101–296 constitute an ATP-grasp domain; that stretch reads KLMWRAAGLA…YPTLVRRVLE (196 aa). 127-182 contacts ATP; that stretch reads EEELGLPLFVKPAREGSSIGVTKVKERGALKAAYEEAARHDPLVIAEKGVMGGEYT. Mg(2+) is bound by residues D250, E263, and N265.

It belongs to the D-alanine--D-alanine ligase family. Requires Mg(2+) as cofactor. Mn(2+) is required as a cofactor.

It localises to the cytoplasm. The enzyme catalyses 2 D-alanine + ATP = D-alanyl-D-alanine + ADP + phosphate + H(+). It functions in the pathway cell wall biogenesis; peptidoglycan biosynthesis. Cell wall formation. The protein is D-alanine--D-alanine ligase of Dechloromonas aromatica (strain RCB).